We begin with the raw amino-acid sequence, 277 residues long: Large ribosomal subunit protein uL2cz/uL2cy (277 aa).

Disordered regions lie at residues 1–31 (MAIH…NTRK) and 227–277 (NPVD…RRSK).

Belongs to the universal ribosomal protein uL2 family. As to quaternary structure, part of the 50S ribosomal subunit.

It is found in the plastid. Its subcellular location is the chloroplast. The protein is Large ribosomal subunit protein uL2cz/uL2cy (rpl2-A) of Manihot esculenta (Cassava).